Reading from the N-terminus, the 487-residue chain is UDP-N-acetylmuramoyl-L-alanyl-D-glutamate--2,6-diaminopimelate ligase (487 aa).

2 residues coordinate UDP-N-acetyl-alpha-D-muramoyl-L-alanyl-D-glutamate: leucine 23 and serine 25. Position 108 to 114 (108 to 114) interacts with ATP; sequence GTNGKTS. UDP-N-acetyl-alpha-D-muramoyl-L-alanyl-D-glutamate is bound by residues 150–151, serine 177, glutamine 183, and arginine 185; that span reads TT. Lysine 217 bears the N6-carboxylysine mark. Residues arginine 378, 402-405, glycine 453, and glutamate 457 each bind meso-2,6-diaminopimelate; that span reads DNPR. Residues 402–405 carry the Meso-diaminopimelate recognition motif motif; sequence DNPR.

The protein belongs to the MurCDEF family. MurE subfamily. It depends on Mg(2+) as a cofactor. Carboxylation is probably crucial for Mg(2+) binding and, consequently, for the gamma-phosphate positioning of ATP.

Its subcellular location is the cytoplasm. The catalysed reaction is UDP-N-acetyl-alpha-D-muramoyl-L-alanyl-D-glutamate + meso-2,6-diaminopimelate + ATP = UDP-N-acetyl-alpha-D-muramoyl-L-alanyl-gamma-D-glutamyl-meso-2,6-diaminopimelate + ADP + phosphate + H(+). The protein operates within cell wall biogenesis; peptidoglycan biosynthesis. Functionally, catalyzes the addition of meso-diaminopimelic acid to the nucleotide precursor UDP-N-acetylmuramoyl-L-alanyl-D-glutamate (UMAG) in the biosynthesis of bacterial cell-wall peptidoglycan. The protein is UDP-N-acetylmuramoyl-L-alanyl-D-glutamate--2,6-diaminopimelate ligase of Pseudomonas syringae pv. tomato (strain ATCC BAA-871 / DC3000).